We begin with the raw amino-acid sequence, 271 residues long: Putative pyruvate, phosphate dikinase regulatory protein (271 aa).

153–160 (GVSRTSKT) is an ADP binding site.

This sequence belongs to the pyruvate, phosphate/water dikinase regulatory protein family. PDRP subfamily.

The catalysed reaction is N(tele)-phospho-L-histidyl/L-threonyl-[pyruvate, phosphate dikinase] + ADP = N(tele)-phospho-L-histidyl/O-phospho-L-threonyl-[pyruvate, phosphate dikinase] + AMP + H(+). It catalyses the reaction N(tele)-phospho-L-histidyl/O-phospho-L-threonyl-[pyruvate, phosphate dikinase] + phosphate + H(+) = N(tele)-phospho-L-histidyl/L-threonyl-[pyruvate, phosphate dikinase] + diphosphate. Functionally, bifunctional serine/threonine kinase and phosphorylase involved in the regulation of the pyruvate, phosphate dikinase (PPDK) by catalyzing its phosphorylation/dephosphorylation. In Shouchella clausii (strain KSM-K16) (Alkalihalobacillus clausii), this protein is Putative pyruvate, phosphate dikinase regulatory protein.